Consider the following 543-residue polypeptide: Carboxypeptidase Y homolog A (543 aa).

The N-terminal stretch at 1 to 17 (MRVLPATLLVGAATAAV) is a signal peptide. A propeptide spanning residues 18–124 (PPFQQILGLP…KLEAYDLRVK (107 aa)) is cleaved from the precursor. 5 cysteine pairs are disulfide-bonded: Cys179-Cys419, Cys313-Cys327, Cys337-Cys360, Cys344-Cys353, and Cys382-Cys389. A glycan (N-linked (GlcNAc...) asparagine) is linked at Asn210. The active site involves Ser266. Residue Asp458 is part of the active site. N-linked (GlcNAc...) asparagine glycosylation occurs at Asn509. Residue His520 is part of the active site.

It belongs to the peptidase S10 family.

It localises to the vacuole. It catalyses the reaction Release of a C-terminal amino acid with broad specificity.. Vacuolar carboxypeptidase involved in degradation of small peptides. Digests preferentially peptides containing an aliphatic or hydrophobic residue in P1' position, as well as methionine, leucine or phenylalanine in P1 position of ester substrate. The sequence is that of Carboxypeptidase Y homolog A (cpyA) from Aspergillus clavatus (strain ATCC 1007 / CBS 513.65 / DSM 816 / NCTC 3887 / NRRL 1 / QM 1276 / 107).